The sequence spans 298 residues: MATH domain and coiled-coil domain-containing protein At3g58280 (298 aa).

In terms of domain architecture, MATH spans 9–128 (KKTFGWVIKD…NGEITIIAEV (120 aa)). The stretch at 240 to 288 (NLDWLRQKFDQALEKQIAYDTRIGELEKQVKKRKLAVTELEADLEKEKA) forms a coiled coil.

The polypeptide is MATH domain and coiled-coil domain-containing protein At3g58280 (Arabidopsis thaliana (Mouse-ear cress)).